The primary structure comprises 396 residues: Elongation factor Tu (396 aa).

In terms of domain architecture, tr-type G spans 10–206; sequence KPHVNVGTIG…ALDSYIPTPE (197 aa). Residues 19–26 form a G1 region; sequence GHVDHGKT. 19–26 lines the GTP pocket; it reads GHVDHGKT. Thr26 is a binding site for Mg(2+). The tract at residues 60-64 is G2; that stretch reads GITIN. Residues 81–84 form a G3 region; sequence DCPG. GTP contacts are provided by residues 81–85 and 136–139; these read DCPGH and NKCD. A G4 region spans residues 136-139; it reads NKCD. Residues 174–176 are G5; it reads SAL.

The protein belongs to the TRAFAC class translation factor GTPase superfamily. Classic translation factor GTPase family. EF-Tu/EF-1A subfamily. Monomer.

Its subcellular location is the cytoplasm. It catalyses the reaction GTP + H2O = GDP + phosphate + H(+). In terms of biological role, GTP hydrolase that promotes the GTP-dependent binding of aminoacyl-tRNA to the A-site of ribosomes during protein biosynthesis. The polypeptide is Elongation factor Tu (Aromatoleum aromaticum (strain DSM 19018 / LMG 30748 / EbN1) (Azoarcus sp. (strain EbN1))).